The following is a 118-amino-acid chain: Ribonuclease P protein component (118 aa).

Belongs to the RnpA family. As to quaternary structure, consists of a catalytic RNA component (M1 or rnpB) and a protein subunit.

The catalysed reaction is Endonucleolytic cleavage of RNA, removing 5'-extranucleotides from tRNA precursor.. Functionally, RNaseP catalyzes the removal of the 5'-leader sequence from pre-tRNA to produce the mature 5'-terminus. It can also cleave other RNA substrates such as 4.5S RNA. The protein component plays an auxiliary but essential role in vivo by binding to the 5'-leader sequence and broadening the substrate specificity of the ribozyme. The chain is Ribonuclease P protein component from Shewanella frigidimarina (strain NCIMB 400).